Consider the following 385-residue polypeptide: V-type proton ATPase subunit C (385 aa).

It belongs to the V-ATPase C subunit family. In terms of assembly, V-ATPase is a heteromultimeric enzyme made up of two complexes: the ATP-hydrolytic V1 complex and the proton translocation V0 complex. The V1 complex consists of three catalytic AB heterodimers that form a heterohexamer, three peripheral stalks each consisting of EG heterodimers, one central rotor including subunits D and F, and the regulatory subunits C and H. The proton translocation complex V0 consists of the proton transport subunit a, a ring of proteolipid subunits c9c'', rotary subunit d, subunits e and f, and the accessory subunits vah-19/Ac45 and vah-20/PRR. Interacts with V-type proton ATPase subunits a1 unc-32, a2 vha-5 and a3 vha-6.

The protein resides in the cytoplasm. It localises to the membrane. In terms of biological role, subunit of the V1 complex of vacuolar(H+)-ATPase (V-ATPase), a multisubunit enzyme composed of a peripheral complex (V1) that hydrolyzes ATP and a membrane integral complex (V0) that translocates protons. V-ATPase is responsible for acidifying and maintaining the pH of intracellular compartments and in some cell types, is targeted to the plasma membrane, where it is responsible for acidifying the extracellular environment. Subunit C is necessary for the assembly of the catalytic sector of the enzyme and is likely to have a specific function in its catalytic activity. Has roles in embryogenesis and ovulation. This chain is V-type proton ATPase subunit C, found in Caenorhabditis briggsae.